A 410-amino-acid polypeptide reads, in one-letter code: Cysteine desulfurase IscS (410 aa).

Pyridoxal 5'-phosphate-binding positions include alanine 80–threonine 81, asparagine 160, glutamine 188, and serine 208–histidine 210. Lysine 211 is subject to N6-(pyridoxal phosphate)lysine. A pyridoxal 5'-phosphate-binding site is contributed by threonine 248. The active-site Cysteine persulfide intermediate is cysteine 334. Cysteine 334 contacts [2Fe-2S] cluster.

It belongs to the class-V pyridoxal-phosphate-dependent aminotransferase family. NifS/IscS subfamily. Homodimer. Forms a heterotetramer with IscU, interacts with other sulfur acceptors. The cofactor is pyridoxal 5'-phosphate.

The protein resides in the cytoplasm. It carries out the reaction (sulfur carrier)-H + L-cysteine = (sulfur carrier)-SH + L-alanine. The protein operates within cofactor biosynthesis; iron-sulfur cluster biosynthesis. In terms of biological role, master enzyme that delivers sulfur to a number of partners involved in Fe-S cluster assembly, tRNA modification or cofactor biosynthesis. Catalyzes the removal of elemental sulfur atoms from cysteine to produce alanine. Functions as a sulfur delivery protein for Fe-S cluster synthesis onto IscU, an Fe-S scaffold assembly protein, as well as other S acceptor proteins. This is Cysteine desulfurase IscS from Rickettsia peacockii (strain Rustic).